Consider the following 484-residue polypeptide: Endoglucanase 9 (484 aa).

Positions 1 to 21 (MTSLFFFVLLFSSLLISNGDA) are cleaved as a signal peptide. The active-site Nucleophile is Asp77. Active-site residues include His402, Asp453, and Glu462.

Belongs to the glycosyl hydrolase 9 (cellulase E) family. As to expression, specifically expressed in root cap cells.

It localises to the secreted. The protein resides in the cell wall. The enzyme catalyses Endohydrolysis of (1-&gt;4)-beta-D-glucosidic linkages in cellulose, lichenin and cereal beta-D-glucans.. This is Endoglucanase 9 (CEL3) from Arabidopsis thaliana (Mouse-ear cress).